Consider the following 154-residue polypeptide: Low molecular weight protein-tyrosine-phosphatase PtpA (154 aa).

Cys8 serves as the catalytic Nucleophile. The active site involves Arg14. Asp120 acts as the Proton donor in catalysis.

Belongs to the low molecular weight phosphotyrosine protein phosphatase family. In terms of assembly, interacts with host CORO1A. Phosphorylations at Tyr-122 and Tyr-123 are essential for phosphatase activity.

It localises to the secreted. The catalysed reaction is O-phospho-L-tyrosyl-[protein] + H2O = L-tyrosyl-[protein] + phosphate. Its function is as follows. Secreted tyrosine phosphatase that plays a critical role during infection as a bacterial effector protein that counteracts host defenses. Required for intramacrophage survival. This is Low molecular weight protein-tyrosine-phosphatase PtpA (ptpA) from Staphylococcus aureus (strain MRSA252).